A 429-amino-acid chain; its full sequence is MSKSLQAIRGMNDILPEQTPLWRHFEGTVARLLDNYGYRQIRMPIVEFTELFKRSIGEVTDIVEKEMYTFADRNGDSLTLRPEGTAACVRAVLEHGITGGGQVQKLWYIGPMFRHERPQKGRYRQFHQIGVEVFNLDGPDIDAELIVMTWRLWGLLGIRDAVKLELNSLGTSEARARYREALVEYLSARLDQLDEDSQRRLKTNPLRVLDTKHPETQAVLVDAPKLADYLDDESRVHFEGLKARLDAAGIPYVINPKLVRGLDYYSKTVFEWVTDQLGAQGTVCAGGRYDGLVEQMGGKPTAGVGFAMGIERLVLLLETLEQVPEEIARQVDVYLCAFGEAAELAALALTEKVRDQLPTLRLQVNAGAGSFKSQFKKADKSGALYALILGEEELAAKVIGVKPLRGQGEQQNIAWDALSEHLASCVVQG.

The protein belongs to the class-II aminoacyl-tRNA synthetase family. In terms of assembly, homodimer.

The protein localises to the cytoplasm. It carries out the reaction tRNA(His) + L-histidine + ATP = L-histidyl-tRNA(His) + AMP + diphosphate + H(+). In Pseudomonas syringae pv. syringae (strain B728a), this protein is Histidine--tRNA ligase.